Here is a 618-residue protein sequence, read N- to C-terminus: Mitochondrial Rho GTPase 1 (618 aa).

Residues 1–592 (MKKDVRILLV…TQADLKSSTF (592 aa)) lie on the Cytoplasmic side of the membrane. A Miro 1 domain is found at 2-168 (KKDVRILLVG…FYYAQKAVLH (167 aa)). 5 residues coordinate GTP: Arg-14, Gly-16, Lys-17, Thr-18, and Ser-19. Residue Thr-18 coordinates Mg(2+). Residues Pro-35 and Asp-57 each contribute to the Mg(2+) site. Position 59 (Ser-59) interacts with GTP. An N6-acetyllysine modification is found at Lys-92. GTP-binding residues include Asn-118, Lys-119, Asp-121, Ala-149, and Lys-150. A Glycyl lysine isopeptide (Lys-Gly) (interchain with G-Cter in ubiquitin) cross-link involves residue Lys-153. An EF-hand 1 domain is found at 184-219 (ACIKALTRIFKISDQDNDGTLNDAELNFFQRICFNT). Residues Asp-197, Asp-199, Asp-201, Thr-203, and Glu-208 each contribute to the Ca(2+) site. Residue Lys-235 forms a Glycyl lysine isopeptide (Lys-Gly) (interchain with G-Cter in ubiquitin) linkage. The EF-hand 2 domain maps to 304–339 (HAYLFLQSTFDKHDLDRDCALSPDELKDLFKVFPYI). Asp-317, Asp-319, Asp-321, Ala-323, and Glu-328 together coordinate Ca(2+). Positions 416–579 (RNVFRCNVIG…FVKLTTMAMY (164 aa)) constitute a Miro 2 domain. Asn-428, Cys-429, Gly-430, Lys-431, Ser-432, Gly-433, and Lys-447 together coordinate GTP. Asn-428 lines the Mg(2+) pocket. Residues Asn-428, Cys-429, Gly-430, Lys-431, Ser-432, Gly-433, Lys-447, Lys-454, Ser-477, Glu-478, Lys-528, Asp-530, Thr-558, Cys-559, and Asn-560 each contribute to the GDP site. Positions 528, 530, 558, and 559 each coordinate GTP. A Glycyl lysine isopeptide (Lys-Gly) (interchain with G-Cter in ubiquitin) cross-link involves residue Lys-572. A helical; Anchor for type IV membrane protein transmembrane segment spans residues 593–615 (WLRASFGATVFAVLGFAMYKALL). The Mitochondrial intermembrane segment spans residues 616-618 (KQR).

It belongs to the mitochondrial Rho GTPase family. Homodimer. Interacts with the kinesin-binding proteins TRAK1/OIP106 and TRAK2/GRIF1, forming a link between mitochondria and the trafficking apparatus of the microtubules. Interacts with RAP1GDS1. Interacts with ARMCX1. Found in a complex with KIF5B, OGT, RHOT2 and TRAK1. Post-translationally, ubiquitinated by PRKN during mitophagy, leading to its degradation and enhancement of mitophagy. Deubiquitinated by USP30. In terms of processing, acetylation on Lys-92 decreases sensitivity of mitochondrial transport to elevated Ca(2+) levels, increases mitochondrial transport and promotes axon growth. Deacetylated by HDAC6 which blocks mitochondrial transport and mediates axon growth inhibition. Ubiquitously expressed. Expressed at high level in heart and skeletal muscle.

The protein localises to the mitochondrion outer membrane. It catalyses the reaction GTP + H2O = GDP + phosphate + H(+). The enzyme catalyses ATP + H2O = ADP + phosphate + H(+). The catalysed reaction is UTP + H2O = UDP + phosphate + H(+). Functionally, atypical mitochondrial nucleoside-triphosphatase (NTPase) involved in mitochondrial trafficking. Probably involved in control of anterograde transport of mitochondria and their subcellular distribution. Promotes mitochondrial fission during high calcium conditions. Can hydrolyze GTP, ATP and UTP. The polypeptide is Mitochondrial Rho GTPase 1 (RHOT1) (Homo sapiens (Human)).